The chain runs to 534 residues: Cytochrome P450 monooxygenase CYP4 (534 aa).

The helical transmembrane segment at 46–66 (TIIFCVLMSLVGYIVSRIIWG) threads the bilayer. The N-linked (GlcNAc...) asparagine glycan is linked to Asn-220. Cys-477 lines the heme pocket. N-linked (GlcNAc...) asparagine glycosylation is present at Asn-515.

The protein belongs to the cytochrome P450 family. Requires heme as cofactor.

Its subcellular location is the membrane. It participates in secondary metabolite biosynthesis. Cytochrome P450 monooxygenase; part of the gene cluster that mediates the biosynthesis of a tyrosine-derived cytochalasan acting as a fungal signal recognized by resistant rice plants and leads to avirulence in Pi33 resistant rice cultivars. The first step in the pathway is catalyzed by the hybrid PKS-NRPS ACE1, assisted by the enoyl reductase RAP1, that are responsible for fusion of the tyrosine precursor and the polyketide backbone. The polyketide synthase module (PKS) of ACE1 is responsible for the synthesis of the polyketide backbone and the downstream nonribosomal peptide synthetase (NRPS) amidates the carboxyl end of the polyketide with the tyrosine precursor. Because ACE1 lacks a designated enoylreductase (ER) domain, the required activity is provided the enoyl reductase RAP1. Reduction by the hydrolyase ORFZ, followed by dehydration and intra-molecular Diels-Alder cyclization by the Diels-Alderase ORF3 then yield the required isoindolone-fused macrocycle. A number of oxidative steps catalyzed by the tailoring enzymes identified within the cluster, including cytochrome P450 monooxygenases CYP1 to CYP4, the FAD-linked oxidoreductase OXR2 and the short-chain dehydrogenase/reductase OXR1, are further required to afford the final cytochalasans that confer avirulence and which have still to be identified. The monooxygenase CYP1 has been shown to be a site-selective C-18 hydroxylase whereas the function of CYP3 is the site-selective epoxidation of the C-6/C-7 olefin that is present in some intermediate compounds. Finally, SYN2 and RAP2 are not required for avirulence in Pi33 resistant rice cultivars. The sequence is that of Cytochrome P450 monooxygenase CYP4 from Pyricularia oryzae (strain 70-15 / ATCC MYA-4617 / FGSC 8958) (Rice blast fungus).